Here is a 321-residue protein sequence, read N- to C-terminus: Lipoyl synthase (321 aa).

[4Fe-4S] cluster contacts are provided by cysteine 68, cysteine 73, cysteine 79, cysteine 94, cysteine 98, cysteine 101, and serine 308. Positions 80–297 (FNHGTATFMI…KAYADEIGFT (218 aa)) constitute a Radical SAM core domain.

The protein belongs to the radical SAM superfamily. Lipoyl synthase family. It depends on [4Fe-4S] cluster as a cofactor.

It is found in the cytoplasm. It catalyses the reaction [[Fe-S] cluster scaffold protein carrying a second [4Fe-4S](2+) cluster] + N(6)-octanoyl-L-lysyl-[protein] + 2 oxidized [2Fe-2S]-[ferredoxin] + 2 S-adenosyl-L-methionine + 4 H(+) = [[Fe-S] cluster scaffold protein] + N(6)-[(R)-dihydrolipoyl]-L-lysyl-[protein] + 4 Fe(3+) + 2 hydrogen sulfide + 2 5'-deoxyadenosine + 2 L-methionine + 2 reduced [2Fe-2S]-[ferredoxin]. It functions in the pathway protein modification; protein lipoylation via endogenous pathway; protein N(6)-(lipoyl)lysine from octanoyl-[acyl-carrier-protein]: step 2/2. Catalyzes the radical-mediated insertion of two sulfur atoms into the C-6 and C-8 positions of the octanoyl moiety bound to the lipoyl domains of lipoate-dependent enzymes, thereby converting the octanoylated domains into lipoylated derivatives. This is Lipoyl synthase from Pseudoalteromonas translucida (strain TAC 125).